The chain runs to 81 residues: Putative membrane protein insertion efficiency factor (81 aa).

The protein belongs to the UPF0161 family.

The protein localises to the cell inner membrane. Its function is as follows. Could be involved in insertion of integral membrane proteins into the membrane. This is Putative membrane protein insertion efficiency factor from Pseudomonas savastanoi pv. phaseolicola (strain 1448A / Race 6) (Pseudomonas syringae pv. phaseolicola (strain 1448A / Race 6)).